The primary structure comprises 407 residues: uncharacterized protein (407 aa).

Disordered regions lie at residues 1 to 62 and 350 to 379; these read MTGR…NGDP and SVTPAAAAPPGVPKPEHGEELEADPWKPSS. The segment covering 17 to 30 has biased composition (basic and acidic residues); it reads PVEKMPRFQREHGA.

This is an uncharacterized protein from Ictaluridae (bullhead catfishes).